Reading from the N-terminus, the 136-residue chain is Beta-hordothionin (136 aa).

Positions 1-27 are cleaved as a signal peptide; the sequence is MGSKGLKGVMVCLLILGLVLEHVQVEG. 4 disulfide bridges follow: cysteine 30–cysteine 66, cysteine 31–cysteine 58, cysteine 39–cysteine 56, and cysteine 43–cysteine 52. Positions 73–136 are cleaved as a propeptide — acidic domain; sequence LALVSNSDEP…GDVGLTSLTA (64 aa).

Belongs to the plant thionin (TC 1.C.44) family. 4 C-C subfamily. In terms of assembly, homodimer.

The protein localises to the secreted. Functionally, thionins are small plant proteins which are toxic to animal cells. They seem to exert their toxic effect at the level of the cell membrane. Their precise function is not known. This Hordeum vulgare (Barley) protein is Beta-hordothionin (THI1.2).